Here is a 225-residue protein sequence, read N- to C-terminus: Probable septum site-determining protein MinC (225 aa).

Positions 87–112 (PTHMASPQGNSSKTRSSDTQPKPKTP) are disordered. A compositionally biased stretch (polar residues) spans 91-108 (ASPQGNSSKTRSSDTQPK).

The protein belongs to the MinC family. As to quaternary structure, interacts with MinD and FtsZ.

Functionally, cell division inhibitor that blocks the formation of polar Z ring septums. Rapidly oscillates between the poles of the cell to destabilize FtsZ filaments that have formed before they mature into polar Z rings. Prevents FtsZ polymerization. This Prochlorococcus marinus (strain MIT 9313) protein is Probable septum site-determining protein MinC.